Consider the following 395-residue polypeptide: Acetate kinase (395 aa).

Asn-8 contacts Mg(2+). ATP is bound at residue Lys-15. Arg-90 serves as a coordination point for substrate. The Proton donor/acceptor role is filled by Asp-147. ATP contacts are provided by residues 207–211 (HLGNG), 284–286 (DMR), and 330–334 (GIGEN). Position 383 (Glu-383) interacts with Mg(2+).

This sequence belongs to the acetokinase family. As to quaternary structure, homodimer. Mg(2+) serves as cofactor. Requires Mn(2+) as cofactor.

It is found in the cytoplasm. The catalysed reaction is acetate + ATP = acetyl phosphate + ADP. Its pathway is metabolic intermediate biosynthesis; acetyl-CoA biosynthesis; acetyl-CoA from acetate: step 1/2. Its function is as follows. Catalyzes the formation of acetyl phosphate from acetate and ATP. Can also catalyze the reverse reaction. The protein is Acetate kinase of Enterococcus faecalis (strain ATCC 700802 / V583).